The primary structure comprises 177 residues: MLQTYKDQLPDYAKDLKLNLTQVLSESPSSELSNQQITGVALAVAYATRNRQLIELIFQKAEAELDESTLQAIKAAASIMAMNNIYYRFVHLVKDSEYQRLPANLRMNIIANPGIDKKDFELYSLAVSAINGCGLCIDAHANTLIKAGFSKHSIQHVIRIAAVLNGLAQVSIIENKT.

C133 (proton donor) is an active-site residue. A disulfide bridge links C133 with C136. The active-site Cysteine sulfenic acid (-SOH) intermediate is C136.

Belongs to the AhpD family.

It catalyses the reaction N(6)-[(R)-dihydrolipoyl]-L-lysyl-[lipoyl-carrier protein] + a hydroperoxide = N(6)-[(R)-lipoyl]-L-lysyl-[lipoyl-carrier protein] + an alcohol + H2O. Its function is as follows. Antioxidant protein with alkyl hydroperoxidase activity. Required for the reduction of the AhpC active site cysteine residues and for the regeneration of the AhpC enzyme activity. In Coxiella burnetii (strain CbuG_Q212) (Coxiella burnetii (strain Q212)), this protein is Alkyl hydroperoxide reductase AhpD.